We begin with the raw amino-acid sequence, 254 residues long: D-aminoacyl-tRNA deacylase (254 aa).

Belongs to the DtdA deacylase family. In terms of assembly, monomer. Zn(2+) serves as cofactor.

It catalyses the reaction a D-aminoacyl-tRNA + H2O = a tRNA + a D-alpha-amino acid + H(+). It carries out the reaction glycyl-tRNA(Ala) + H2O = tRNA(Ala) + glycine + H(+). D-aminoacyl-tRNA deacylase with broad substrate specificity. By recycling D-aminoacyl-tRNA to D-amino acids and free tRNA molecules, this enzyme counteracts the toxicity associated with the formation of D-aminoacyl-tRNA entities in vivo. This chain is D-aminoacyl-tRNA deacylase, found in Methanococcus vannielii (strain ATCC 35089 / DSM 1224 / JCM 13029 / OCM 148 / SB).